A 227-amino-acid chain; its full sequence is A-type potassium channel modulatory protein KCNIP1 (227 aa).

Residues 38-94 (LEMTMVCHRPEGLEQLEAQTNFTKRELQVLYRGFKNECPSGVVNEETFKQIYAQFFP) enclose the EF-hand 1; degenerate domain. 3 EF-hand domains span residues 97-132 (DASTYAHYLFNAFDTTQTGSVKFEDFVTALSILLRG), 133-168 (TVHEKLRWTFNLYDINKDGYINKEEMMDIVKAIYDM), and 181-216 (TPRQHVDVFFQKMDKNKDGIVTLDEFLESCQEDDNI). Residues Asp-146, Asn-148, Asp-150, Tyr-152, Glu-157, Asp-194, Asn-196, Asp-198, and Glu-205 each coordinate Ca(2+). Positions 214 to 227 (DNIMRSLQLFQNVM) are interaction with KCND2.

It belongs to the recoverin family. Component of heteromultimeric potassium channels. Identified in potassium channel complexes containing KCND1, KCND2, KCND3, KCNIP1, KCNIP2, KCNIP3, KCNIP4, DPP6 and DPP10. Part of a heterooctamer composed of the tetrameric channel and four KCNIP1 chains. Probably part of a complex consisting of KCNIP1, KCNIP2 isoform 3 and KCND2. Self-associates to form homodimers and homotetramers. Interacts with KCNIP2 isoform 3 in a calcium-dependent manner. Interacts with KCND2; this interaction mediates the capture of both the N- and C-terminus of KCND2, thus preventing KCND2 N-type inactivation and modulates the channel gating kinetics. Interacts with KCND3; each KCNIP1 monomer interacts with two adjacent KCND3 subunits, through both the N-terminal inactivation ball of a KCND3 subunit and a C-terminal helix from the adjacent KCND3 subunit, clamping them together; this interaction stabilizes the tetrameric form and modulates the channel gating kinetics namely channel activation and inactivation kinetics and rate of recovery from inactivation. Detected in hippocampus and in the molecular layer of the dentate gyrus (at protein level). Isoform 1 and isoform 2 are predominantly expressed at equal levels in brain. Colocalizes with KCND3 in inhibitory interneurons in cortex and hippocampus and in striatal interneurons.

The protein localises to the cell membrane. It localises to the cytoplasm. It is found in the cell projection. The protein resides in the dendrite. Functionally, regulatory subunit of Kv4/D (Shal)-type voltage-gated rapidly inactivating A-type potassium channels. Regulates channel density, inactivation kinetics and rate of recovery from inactivation in a calcium-dependent and isoform-specific manner. Modulates KCND2/Kv4.2 currents. In vitro, modulates KCND1/Kv4.1 currents. Increases the presence of KCND2 at the cell surface. The polypeptide is A-type potassium channel modulatory protein KCNIP1 (Rattus norvegicus (Rat)).